We begin with the raw amino-acid sequence, 208 residues long: Uracil phosphoribosyltransferase (208 aa).

5-phospho-alpha-D-ribose 1-diphosphate is bound by residues Arg78, Arg103, and 130 to 138 (DPMLATGGS). Uracil is bound by residues Ile193 and 198–200 (GDA). Asp199 contacts 5-phospho-alpha-D-ribose 1-diphosphate.

The protein belongs to the UPRTase family. Mg(2+) serves as cofactor.

It catalyses the reaction UMP + diphosphate = 5-phospho-alpha-D-ribose 1-diphosphate + uracil. It participates in pyrimidine metabolism; UMP biosynthesis via salvage pathway; UMP from uracil: step 1/1. With respect to regulation, allosterically activated by GTP. Its function is as follows. Catalyzes the conversion of uracil and 5-phospho-alpha-D-ribose 1-diphosphate (PRPP) to UMP and diphosphate. This is Uracil phosphoribosyltransferase from Desulfovibrio desulfuricans (strain ATCC 27774 / DSM 6949 / MB).